Reading from the N-terminus, the 353-residue chain is Photosystem II D2 protein (353 aa).

Thr2 carries the N-acetylthreonine modification. Thr2 bears the Phosphothreonine mark. The chain crosses the membrane as a helical span at residues 41–61 (CAYFALGGWFTGTTFVTSWYT). Chlorophyll a is bound at residue His118. The helical transmembrane segment at 125–141 (GFMLRQFELARSVQLRP) threads the bilayer. Gln130 and Asn143 together coordinate pheophytin a. The helical transmembrane segment at 153-166 (VFVSVFLIYPLGQS) threads the bilayer. Residue His198 participates in chlorophyll a binding. Residues 208–228 (AALLCAIHGATVENTLFEDGD) form a helical membrane-spanning segment. 2 residues coordinate a plastoquinone: His215 and Phe262. Residue His215 coordinates Fe cation. His269 serves as a coordination point for Fe cation. A helical membrane pass occupies residues 279–295 (GLWMSALGVVGLALNLR).

Belongs to the reaction center PufL/M/PsbA/D family. In terms of assembly, PSII is composed of 1 copy each of membrane proteins PsbA, PsbB, PsbC, PsbD, PsbE, PsbF, PsbH, PsbI, PsbJ, PsbK, PsbL, PsbM, PsbT, PsbX, PsbY, PsbZ, Psb30/Ycf12, at least 3 peripheral proteins of the oxygen-evolving complex and a large number of cofactors. It forms dimeric complexes. The D1/D2 heterodimer binds P680, chlorophylls that are the primary electron donor of PSII, and subsequent electron acceptors. It shares a non-heme iron and each subunit binds pheophytin, quinone, additional chlorophylls, carotenoids and lipids. There is also a Cl(-1) ion associated with D1 and D2, which is required for oxygen evolution. The PSII complex binds additional chlorophylls, carotenoids and specific lipids. is required as a cofactor.

It is found in the plastid. It localises to the chloroplast thylakoid membrane. It catalyses the reaction 2 a plastoquinone + 4 hnu + 2 H2O = 2 a plastoquinol + O2. Its function is as follows. Photosystem II (PSII) is a light-driven water:plastoquinone oxidoreductase that uses light energy to abstract electrons from H(2)O, generating O(2) and a proton gradient subsequently used for ATP formation. It consists of a core antenna complex that captures photons, and an electron transfer chain that converts photonic excitation into a charge separation. The D1/D2 (PsbA/PsbD) reaction center heterodimer binds P680, the primary electron donor of PSII as well as several subsequent electron acceptors. D2 is needed for assembly of a stable PSII complex. The polypeptide is Photosystem II D2 protein (Spinacia oleracea (Spinach)).